Here is a 470-residue protein sequence, read N- to C-terminus: Glucose-1-phosphate adenylyltransferase large subunit 1 (470 aa).

The protein belongs to the bacterial/plant glucose-1-phosphate adenylyltransferase family. As to quaternary structure, heterotetramer. Prominently expressed in the leaves and a weaker expression is seen in the tubers.

The protein resides in the plastid. It localises to the chloroplast. The protein localises to the amyloplast. It catalyses the reaction alpha-D-glucose 1-phosphate + ATP + H(+) = ADP-alpha-D-glucose + diphosphate. It participates in glycan biosynthesis; starch biosynthesis. Its activity is regulated as follows. Activated by 3'phosphoglycerate, inhibited by orthophosphate. Allosteric regulation. In terms of biological role, this protein plays a role in synthesis of starch. It catalyzes the synthesis of the activated glycosyl donor, ADP-glucose from Glc-1-P and ATP. This Solanum tuberosum (Potato) protein is Glucose-1-phosphate adenylyltransferase large subunit 1 (AGPS1).